We begin with the raw amino-acid sequence, 518 residues long: Bifunctional purine biosynthesis protein PurH (518 aa).

An MGS-like domain is found at 1 to 144; sequence MNRRAVLSVS…KNQERVSIVV (144 aa).

This sequence belongs to the PurH family.

The catalysed reaction is (6R)-10-formyltetrahydrofolate + 5-amino-1-(5-phospho-beta-D-ribosyl)imidazole-4-carboxamide = 5-formamido-1-(5-phospho-D-ribosyl)imidazole-4-carboxamide + (6S)-5,6,7,8-tetrahydrofolate. The enzyme catalyses IMP + H2O = 5-formamido-1-(5-phospho-D-ribosyl)imidazole-4-carboxamide. It participates in purine metabolism; IMP biosynthesis via de novo pathway; 5-formamido-1-(5-phospho-D-ribosyl)imidazole-4-carboxamide from 5-amino-1-(5-phospho-D-ribosyl)imidazole-4-carboxamide (10-formyl THF route): step 1/1. It functions in the pathway purine metabolism; IMP biosynthesis via de novo pathway; IMP from 5-formamido-1-(5-phospho-D-ribosyl)imidazole-4-carboxamide: step 1/1. The chain is Bifunctional purine biosynthesis protein PurH from Desulfitobacterium hafniense (strain DSM 10664 / DCB-2).